The chain runs to 396 residues: Large ribosomal subunit protein uL24m (396 aa).

Residues 374-396 (QLSLGGGQEDAATTTSPEQPKVV) form a disordered region. Polar residues predominate over residues 384–396 (AATTTSPEQPKVV).

This sequence belongs to the universal ribosomal protein uL24 family. Component of the mitochondrial large ribosomal subunit (mt-LSU). Mature N.crassa 74S mitochondrial ribosomes consist of a small (37S) and a large (54S) subunit. The 37S small subunit contains a 16S ribosomal RNA (16S mt-rRNA) and 32 different proteins. The 54S large subunit contains a 23S rRNA (23S mt-rRNA) and 42 different proteins. uL24m forms the wall of the exit tunnel.

The protein resides in the mitochondrion. Component of the mitochondrial ribosome (mitoribosome), a dedicated translation machinery responsible for the synthesis of mitochondrial genome-encoded proteins, including at least some of the essential transmembrane subunits of the mitochondrial respiratory chain. The mitoribosomes are attached to the mitochondrial inner membrane and translation products are cotranslationally integrated into the membrane. This Neurospora crassa (strain ATCC 24698 / 74-OR23-1A / CBS 708.71 / DSM 1257 / FGSC 987) protein is Large ribosomal subunit protein uL24m (mrpl40).